The following is a 469-amino-acid chain: Bifunctional protein GlmU (469 aa).

Positions 1-237 are pyrophosphorylase; sequence MTTNRKFAIA…SHEVLGVNTR (237 aa). UDP-N-acetyl-alpha-D-glucosamine is bound by residues 12 to 15, K26, Q78, 83 to 84, 105 to 107, G144, E162, N177, and N235; these read LAAG, GT, and SGD. D107 contributes to the Mg(2+) binding site. Residue N235 coordinates Mg(2+). Residues 238–258 are linker; it reads QDLASLDAHLRLQKCQQLMSA. The N-acetyltransferase stretch occupies residues 259–469; sequence GVSIFKPETC…KKRAEQKKKK (211 aa). Positions 341 and 359 each coordinate UDP-N-acetyl-alpha-D-glucosamine. Catalysis depends on H371, which acts as the Proton acceptor. UDP-N-acetyl-alpha-D-glucosamine contacts are provided by Y374 and N385. Acetyl-CoA contacts are provided by residues A388, 394 to 395, S413, A431, and R448; that span reads NY.

The protein in the N-terminal section; belongs to the N-acetylglucosamine-1-phosphate uridyltransferase family. In the C-terminal section; belongs to the transferase hexapeptide repeat family. In terms of assembly, homotrimer. Requires Mg(2+) as cofactor.

The protein localises to the cytoplasm. The catalysed reaction is alpha-D-glucosamine 1-phosphate + acetyl-CoA = N-acetyl-alpha-D-glucosamine 1-phosphate + CoA + H(+). It catalyses the reaction N-acetyl-alpha-D-glucosamine 1-phosphate + UTP + H(+) = UDP-N-acetyl-alpha-D-glucosamine + diphosphate. Its pathway is nucleotide-sugar biosynthesis; UDP-N-acetyl-alpha-D-glucosamine biosynthesis; N-acetyl-alpha-D-glucosamine 1-phosphate from alpha-D-glucosamine 6-phosphate (route II): step 2/2. It functions in the pathway nucleotide-sugar biosynthesis; UDP-N-acetyl-alpha-D-glucosamine biosynthesis; UDP-N-acetyl-alpha-D-glucosamine from N-acetyl-alpha-D-glucosamine 1-phosphate: step 1/1. It participates in bacterial outer membrane biogenesis; LPS lipid A biosynthesis. Its function is as follows. Catalyzes the last two sequential reactions in the de novo biosynthetic pathway for UDP-N-acetylglucosamine (UDP-GlcNAc). The C-terminal domain catalyzes the transfer of acetyl group from acetyl coenzyme A to glucosamine-1-phosphate (GlcN-1-P) to produce N-acetylglucosamine-1-phosphate (GlcNAc-1-P), which is converted into UDP-GlcNAc by the transfer of uridine 5-monophosphate (from uridine 5-triphosphate), a reaction catalyzed by the N-terminal domain. The polypeptide is Bifunctional protein GlmU (Koribacter versatilis (strain Ellin345)).